A 179-amino-acid chain; its full sequence is Inosine/xanthosine triphosphatase (179 aa).

8 to 13 contacts substrate; the sequence is TTNPAK. 2 residues coordinate Mg(2+): Asp38 and Glu68. 68 to 69 contributes to the substrate binding site; sequence EA.

Belongs to the YjjX NTPase family. In terms of assembly, homodimer. Requires Mg(2+) as cofactor. Mn(2+) is required as a cofactor.

The catalysed reaction is XTP + H2O = XDP + phosphate + H(+). The enzyme catalyses ITP + H2O = IDP + phosphate + H(+). Its function is as follows. Phosphatase that hydrolyzes non-canonical purine nucleotides such as XTP and ITP to their respective diphosphate derivatives. Probably excludes non-canonical purines from DNA/RNA precursor pool, thus preventing their incorporation into DNA/RNA and avoiding chromosomal lesions. The sequence is that of Inosine/xanthosine triphosphatase from Pectobacterium carotovorum subsp. carotovorum (strain PC1).